Consider the following 521-residue polypeptide: Beta-glucosidase 11 (521 aa).

Positions Met-1–Ser-23 are cleaved as a signal peptide. Residues Gln-45, His-144, and Asn-189 to Glu-190 each bind a beta-D-glucoside. The active-site Proton donor is the Glu-190. A disulfide bond links Cys-209 and Cys-217. 2 N-linked (GlcNAc...) asparagine glycosylation sites follow: Asn-216 and Asn-221. Tyr-356 lines the a beta-D-glucoside pocket. 2 N-linked (GlcNAc...) asparagine glycosylation sites follow: Asn-364 and Asn-388. Residues Glu-422, Trp-466, and Phe-482 each coordinate a beta-D-glucoside. Glu-422 serves as the catalytic Nucleophile.

The protein belongs to the glycosyl hydrolase 1 family.

It catalyses the reaction Hydrolysis of terminal, non-reducing beta-D-glucosyl residues with release of beta-D-glucose.. The sequence is that of Beta-glucosidase 11 from Arabidopsis thaliana (Mouse-ear cress).